We begin with the raw amino-acid sequence, 476 residues long: Viral inhibitor of caspase-8-induced apoptosis (476 aa).

Belongs to the herpesviridae US22 family. As to quaternary structure, interacts with host pro-caspase-8/CASP8; this interaction inhibits CASP8 activation.

In terms of biological role, plays a role in the inhibition of apoptosis by interacting with the pro-domain of pro-caspase-8/CASP8 and thus preventing its activation. In Human cytomegalovirus (strain Merlin) (HHV-5), this protein is Viral inhibitor of caspase-8-induced apoptosis (UL36).